We begin with the raw amino-acid sequence, 891 residues long: Alanine--tRNA ligase (891 aa).

Zn(2+) contacts are provided by histidine 564, histidine 568, cysteine 681, and histidine 685.

The protein belongs to the class-II aminoacyl-tRNA synthetase family. Zn(2+) serves as cofactor.

The protein resides in the cytoplasm. It catalyses the reaction tRNA(Ala) + L-alanine + ATP = L-alanyl-tRNA(Ala) + AMP + diphosphate. In terms of biological role, catalyzes the attachment of alanine to tRNA(Ala) in a two-step reaction: alanine is first activated by ATP to form Ala-AMP and then transferred to the acceptor end of tRNA(Ala). Also edits incorrectly charged Ser-tRNA(Ala) and Gly-tRNA(Ala) via its editing domain. The polypeptide is Alanine--tRNA ligase (Methylorubrum populi (strain ATCC BAA-705 / NCIMB 13946 / BJ001) (Methylobacterium populi)).